The chain runs to 287 residues: RxLR effector protein Avr4 (287 aa).

An N-terminal signal peptide occupies residues 1–24 (MRSLHILLVFTASLLASLTESAKA). Positions 42-55 (RFLRAQTDEKNEER) match the RxLR-dEER motif. The tract at residues 115–138 (KYERMQWQKLKEGETLTFMRLGDR) is W1 motif. Residues 148-171 (QLLRWVAQKKPVESVYDDLQVAGF) form a W2 motif region. The interval 221 to 244 (LFEKWAMEGTHIKSVITTLKLNGK) is W3 motif. Residues 246-267 (ASEMANNENFPALLKYVKLYLD) form a y motif region.

The protein belongs to the RxLR effector family.

The protein localises to the secreted. It localises to the host cytoplasm. It is found in the host nucleus. Its subcellular location is the host nucleolus. The protein resides in the host cytoskeleton. Functionally, secreted effector that acts as an elicitor of hypersensitive response (HR) specifically on plants carrying defense protein R4, through its interaction with this protein. The polypeptide is RxLR effector protein Avr4 (Phytophthora infestans (strain T30-4) (Potato late blight agent)).